Here is a 426-residue protein sequence, read N- to C-terminus: Histidinol dehydrogenase (426 aa).

Residues Y126, Q188, and N210 each coordinate NAD(+). 3 residues coordinate substrate: S233, Q255, and H258. Zn(2+) is bound by residues Q255 and H258. Catalysis depends on proton acceptor residues E323 and H324. Substrate-binding residues include H324, D357, E411, and H416. D357 is a binding site for Zn(2+). Residue H416 coordinates Zn(2+).

This sequence belongs to the histidinol dehydrogenase family. Requires Zn(2+) as cofactor.

It catalyses the reaction L-histidinol + 2 NAD(+) + H2O = L-histidine + 2 NADH + 3 H(+). It participates in amino-acid biosynthesis; L-histidine biosynthesis; L-histidine from 5-phospho-alpha-D-ribose 1-diphosphate: step 9/9. Catalyzes the sequential NAD-dependent oxidations of L-histidinol to L-histidinaldehyde and then to L-histidine. The protein is Histidinol dehydrogenase of Heliobacterium mobile (Heliobacillus mobilis).